Consider the following 497-residue polypeptide: MORN repeat-containing protein 1 (497 aa).

Positions 1–27 are disordered; that stretch reads MAAAGEGTPSSRGPRRDPPRRPPRNGY. 7 MORN repeats span residues 39–61, 62–84, 86–108, 109–131, 132–154, 155–177, and 178–200; these read YEGEWKAGRKHGHGKLLFKDGSY, YEGAFVDGEITGEGRRHWAWSGD, FSGQFVLGEPQGYGVMEYKAGGC, YEGEVSHGMREGHGFLVDRDGQV, YQGSFHDNKRHGPGQMLFQNGDK, YDGDWVRDRRQGHGVLRCADGST, and YKGQWHSDVFSGLGSMAHCSGVT. Disordered stretches follow at residues 393–425 and 468–497; these read GGRSRGGLHPRGTPPTAQEPPGGSRPEGRATEE and QPPHVLEEGPEASSSWQAAHSCTPEPPAPR.

The protein is MORN repeat-containing protein 1 (MORN1) of Homo sapiens (Human).